Consider the following 385-residue polypeptide: uncharacterized protein (385 aa).

Helical transmembrane passes span 17–37, 72–92, 107–127, 155–175, 191–211, 295–315, 326–346, and 354–374; these read ILII…FIFT, TELM…WFLL, WILK…KCIT, ICLI…FYII, WIQA…LVLL, AFPS…FYFL, ITLL…IVVN, and ITFT…FNSF.

Its subcellular location is the membrane. This is an uncharacterized protein from Mycoplasma capricolum subsp. capricolum (strain California kid / ATCC 27343 / NCTC 10154).